The chain runs to 102 residues: Carboxysome shell protein CcmK3 (102 aa).

The BMC domain maps to 4–90; that stretch reads AVGTIQTLGF…PQENVETVMP (87 aa).

The protein belongs to the bacterial microcompartments protein family. CcmK subfamily. In terms of assembly, interacts stably with CcmK4, probably forms heterohexamers with a 1:2 CcmK3:CcmK4 stoichiometry. Bulky residues in the pore region probably preclude the formation of homohexamers by this subunit.

Its subcellular location is the carboxysome. A non-essential, minor shell protein of the carboxysome, a polyhedral inclusion where RuBisCO (ribulose bisphosphate carboxylase, rbcL-rbcS) is sequestered. Hexamers form sheets that form the facets of the polyhedral carboxysome. In PCC 7942 there are several CcmK paralogs with presumably functional differences. This subunit probably only makes heterohexamers with CcmK4. The CcmK3-CcmK4 heterohexmers have been suggested to cap other hexamers, perhaps to alter metabolite flux. The polypeptide is Carboxysome shell protein CcmK3 (Synechococcus elongatus (strain ATCC 33912 / PCC 7942 / FACHB-805) (Anacystis nidulans R2)).